We begin with the raw amino-acid sequence, 168 residues long: Thiol peroxidase (168 aa).

The 150-residue stretch at 19-168 (PQAGSKAQAF…YDAALNVLKA (150 aa)) folds into the Thioredoxin domain. Catalysis depends on cysteine 61, which acts as the Cysteine sulfenic acid (-SOH) intermediate. A disulfide bond links cysteine 61 and cysteine 95.

It belongs to the peroxiredoxin family. Tpx subfamily. As to quaternary structure, homodimer.

The catalysed reaction is a hydroperoxide + [thioredoxin]-dithiol = an alcohol + [thioredoxin]-disulfide + H2O. In terms of biological role, thiol-specific peroxidase that catalyzes the reduction of hydrogen peroxide and organic hydroperoxides to water and alcohols, respectively. Plays a role in cell protection against oxidative stress by detoxifying peroxides. The protein is Thiol peroxidase of Salmonella typhimurium (strain LT2 / SGSC1412 / ATCC 700720).